We begin with the raw amino-acid sequence, 82 residues long: UPF0154 protein SPD_1662 (82 aa).

The chain crosses the membrane as a helical span at residues L5–V25.

It belongs to the UPF0154 family.

The protein localises to the cell membrane. The polypeptide is UPF0154 protein SPD_1662 (Streptococcus pneumoniae serotype 2 (strain D39 / NCTC 7466)).